The following is a 301-amino-acid chain: GTP cyclohydrolase FolE2 (301 aa).

It belongs to the GTP cyclohydrolase IV family.

The enzyme catalyses GTP + H2O = 7,8-dihydroneopterin 3'-triphosphate + formate + H(+). It participates in cofactor biosynthesis; 7,8-dihydroneopterin triphosphate biosynthesis; 7,8-dihydroneopterin triphosphate from GTP: step 1/1. Functionally, converts GTP to 7,8-dihydroneopterin triphosphate. In Exiguobacterium sibiricum (strain DSM 17290 / CCUG 55495 / CIP 109462 / JCM 13490 / 255-15), this protein is GTP cyclohydrolase FolE2.